Consider the following 107-residue polypeptide: Putative pterin-4-alpha-carbinolamine dehydratase (107 aa).

Belongs to the pterin-4-alpha-carbinolamine dehydratase family.

The catalysed reaction is (4aS,6R)-4a-hydroxy-L-erythro-5,6,7,8-tetrahydrobiopterin = (6R)-L-erythro-6,7-dihydrobiopterin + H2O. This Paracoccus denitrificans (strain Pd 1222) protein is Putative pterin-4-alpha-carbinolamine dehydratase.